The following is an 852-amino-acid chain: Beta-galactosidase 8 (852 aa).

Positions 1–29 are cleaved as a signal peptide; sequence MEIAAKMVKVRKMEMILLLILVIVVAATA. Asn-31 carries an N-linked (GlcNAc...) asparagine glycan. Glu-188 (proton donor) is an active-site residue. Glu-257 serves as the catalytic Nucleophile. N-linked (GlcNAc...) asparagine glycosylation is found at Asn-258, Asn-475, Asn-766, and Asn-807. The region spanning 766-852 is the SUEL-type lectin domain; sequence NRTRPVLSLK…KSLAVEASCS (87 aa).

The protein belongs to the glycosyl hydrolase 35 family. Expressed in roots, flowers and siliques.

Its subcellular location is the secreted. It is found in the extracellular space. The protein resides in the apoplast. The enzyme catalyses Hydrolysis of terminal non-reducing beta-D-galactose residues in beta-D-galactosides.. The protein is Beta-galactosidase 8 (BGAL8) of Arabidopsis thaliana (Mouse-ear cress).